A 20-amino-acid chain; its full sequence is Antifungal protein 2 large subunit (20 aa).

Positions 1 to 20 are disordered; sequence PEDPQRRYQEXQREXRXQQE.

As to quaternary structure, heterodimer of a large and a small subunit.

In terms of biological role, possesses antifungal activity against P.infestans but not F.graminearum. The protein is Antifungal protein 2 large subunit of Malva parviflora (Little mallow).